Consider the following 1045-residue polypeptide: Collagen alpha-1(VI) chain (1045 aa).

The signal sequence occupies residues 1-24 (MKMLQGRLPLTVLHLFLLLGGGMT). A VWFA 1 domain is found at 65 to 255 (DIFFVLDTSE…LTDDEIDNTI (191 aa)). The interval 277–613 (PSRGLSGPSG…GPPGPGGPPG (337 aa)) is disordered. A triple-helical region region spans residues 280–540 (GLSGPSGPPG…RGDDGRPGNG (261 aa)). A compositionally biased stretch (low complexity) spans 297–309 (PGLPGDRGLPGDP). Residues 327–360 (QGIRGEKGGRGAKGSKGDKGKRGIDGVDGQKGED) show a composition bias toward basic and acidic residues. Residues 375–392 (DGAPGSSGPKGDPGPYGT) are compositionally biased toward low complexity. Residues 400–409 (GTPGTGGRPG) are compositionally biased toward gly residues. Short sequence motifs (cell attachment site) lie at residues 501–503 (RGD) and 554–556 (RGD). The segment covering 600-613 (EGPPGPPGPGGPPG) has biased composition (pro residues). VWFA domains are found at residues 638 to 825 (DLLF…LHNV) and 849 to 1035 (DITM…YQSI).

Belongs to the type VI collagen family.

It localises to the secreted. It is found in the extracellular space. The protein resides in the extracellular matrix. Collagen VI acts as a cell-binding protein. The protein is Collagen alpha-1(VI) chain (col6a1) of Xenopus laevis (African clawed frog).